The following is a 212-amino-acid chain: LexA repressor (212 aa).

The H-T-H motif DNA-binding region spans 26-46 (VREIGEAVGLSSTSTVHGHID). Residues serine 128 and lysine 171 each act as for autocatalytic cleavage activity in the active site.

Belongs to the peptidase S24 family. In terms of assembly, homodimer.

The enzyme catalyses Hydrolysis of Ala-|-Gly bond in repressor LexA.. Represses a number of genes involved in the response to DNA damage (SOS response), including recA and lexA. In the presence of single-stranded DNA, RecA interacts with LexA causing an autocatalytic cleavage which disrupts the DNA-binding part of LexA, leading to derepression of the SOS regulon and eventually DNA repair. In Oenococcus oeni (strain ATCC BAA-331 / PSU-1), this protein is LexA repressor.